Reading from the N-terminus, the 101-residue chain is Therostasin (101 aa).

Residues 1 to 19 (MRGLAVLLLVACFCSVAFG) form the signal peptide. Antistasin-like domains lie at 21 to 46 (CENT…TCLC) and 49 to 75 (CNDA…FCTC).

As to expression, salivary glands.

The protein resides in the secreted. Functionally, potent inhibitor of factor Xa. It also inhibits trypsin in a weaker manner. This Theromyzon tessulatum (Duck leech) protein is Therostasin.